Consider the following 621-residue polypeptide: Endoglucanase 25 (621 aa).

The tract at residues 1-26 is disordered; that stretch reads MYGRDPWGGPLEINTADSATDDDRSR. Residues 1 to 70 are Cytoplasmic-facing; it reads MYGRDPWGGP…DLGCIIVSRK (70 aa). The tract at residues 48–49 is polarized targeting signal 1 (PTS1); that stretch reads LL. The tract at residues 59 to 62 is polarized targeting signal 2 (PTS2); the sequence is YVDL. The helical; Signal-anchor for type II membrane protein transmembrane segment at 71-91 threads the bilayer; the sequence is IFVWTVGTLVAAALLAGFITL. Residues 92-621 are Extracellular-facing; sequence IVKTVPRHHP…PPPPPAPWKP (530 aa). Residues asparagine 108 and asparagine 133 are each glycosylated (N-linked (GlcNAc...) asparagine). Aspartate 165 acts as the Nucleophile in catalysis. N-linked (GlcNAc...) asparagine glycans are attached at residues asparagine 216, asparagine 324, asparagine 345, asparagine 408, and asparagine 425. Residues histidine 513 and aspartate 561 contribute to the active site. Asparagine 567 carries N-linked (GlcNAc...) asparagine glycosylation. Glutamate 570 is an active-site residue.

The protein belongs to the glycosyl hydrolase 9 (cellulase E) family. Glycosylated. N-glycosylation of KOR in the endoplasmic reticulum followed by N-glycan modifications in the Golgi are essential for catalytic activity. As to expression, highly expressed in roots and stems, at intermediate levels in leaves and flowers, and at lower levels in siliques. Expressed in xylem (at protein level).

It localises to the cell membrane. It carries out the reaction Endohydrolysis of (1-&gt;4)-beta-D-glucosidic linkages in cellulose, lichenin and cereal beta-D-glucans.. Required for cellulose microfibril formation. Involved in cell wall assembly during cell elongation and cell plate maturation in cytokinesis. Required for secondary cell wall formation in the developing xylem. May cycle through different intracellular compartments, including plasma membrane. This Arabidopsis thaliana (Mouse-ear cress) protein is Endoglucanase 25 (KOR).